The chain runs to 515 residues: Forkhead box protein H1 (515 aa).

The tract at residues Tyr55–Lys103 is disordered. Positions Pro73–Glu84 are enriched in polar residues. Residues Lys110–Arg206 constitute a DNA-binding region (fork-head). The segment at Tyr307–Ser399 is disordered. Low complexity predominate over residues Ser322–Ser339. Positions Ser375–Pro388 are enriched in polar residues. An SMAD-interaction domain (SID) region spans residues Pro377–Ser503. A Fast/FoxH1 motif 1 (FM1) motif is present at residues Leu402–Tyr406. Positions Pro412–Pro418 match the Fast/FoxH1 motif 2 (FM2) motif. Residues Leu467–Pro488 carry the SMAD-interaction motif (SIM) motif.

As to quaternary structure, ARF1 contains 2 smad2s, 1 smad4 and 1 foxh1/fast-1 protein. Interaction with smad4 is most likely indirect through interaction with the MH2 domain of smad2. Binds to the MH2 domain of smad3, which can incorporate into the ARF1 complex. The ARF1 and ARF2 complexes are activated by distinct TGF-beta family members; formation of ARF1 is promoted by activin. Interacts (via Fork-head domain) with gtf2ird1/wbscr11 (via repeats 4-5).

It is found in the nucleus. In terms of biological role, transcriptional activator. Recognizes and binds to the DNA sequence 5'-TGT[GT][GT]ATT-3'. Upon TGF-beta induction, forms a transcriptionally active complex with smad2 and smad4 called activin-responsive factor 1 (ARF1), which binds a site on the mix-B/mix.2 promoter called the activin response element (ARE). Binds to activated smads and the ARE with much lower affinity than fast3. Necessary for the first steps in mesoderm specification, directly inducing mesodermal genes. Acts with fast3 to control the convergent extension movements of gastrulation. Binds to the proximal element (PE) of the gsc gene and cooperates with gtf2ird1/wbscr11 and SMAD proteins to regulate gsc transcription. The sequence is that of Forkhead box protein H1 from Xenopus tropicalis (Western clawed frog).